Consider the following 151-residue polypeptide: Putative olfactory receptor 13C6 (151 aa).

Residues 1 to 27 (MVSANQTASVTEFILLGLSAHPKLEKT) are Extracellular-facing. Asn5 carries an N-linked (GlcNAc...) asparagine glycan. Residues 28–48 (FFVLILLMYLVILLGNGVLIL) traverse the membrane as a helical segment. At 49 to 61 (MTVSNSHLHMPMY) the chain is on the cytoplasmic side. Residues 62–82 (FFLGNLSFLDICYTTSSVPLI) traverse the membrane as a helical segment. The Extracellular portion of the chain corresponds to 83–100 (LDSFLTPRKTISFSACAV). The helical transmembrane segment at 101-121 (QMFLSFAMGATECVLLSMMAF) threads the bilayer.

Belongs to the G-protein coupled receptor 1 family.

It localises to the cell membrane. Its function is as follows. Odorant receptor. The chain is Putative olfactory receptor 13C6 from Homo sapiens (Human).